The following is a 138-amino-acid chain: ATP synthase epsilon chain (138 aa).

Belongs to the ATPase epsilon chain family. F-type ATPases have 2 components, CF(1) - the catalytic core - and CF(0) - the membrane proton channel. CF(1) has five subunits: alpha(3), beta(3), gamma(1), delta(1), epsilon(1). CF(0) has three main subunits: a, b and c.

The protein localises to the cell membrane. Produces ATP from ADP in the presence of a proton gradient across the membrane. This Streptococcus mutans serotype c (strain ATCC 700610 / UA159) protein is ATP synthase epsilon chain (atpC).